A 117-amino-acid polypeptide reads, in one-letter code: Ribosome-binding factor A (117 aa).

The protein belongs to the RbfA family. In terms of assembly, monomer. Binds 30S ribosomal subunits, but not 50S ribosomal subunits or 70S ribosomes.

It localises to the cytoplasm. Its function is as follows. One of several proteins that assist in the late maturation steps of the functional core of the 30S ribosomal subunit. Associates with free 30S ribosomal subunits (but not with 30S subunits that are part of 70S ribosomes or polysomes). Required for efficient processing of 16S rRNA. May interact with the 5'-terminal helix region of 16S rRNA. The polypeptide is Ribosome-binding factor A (Leptospira borgpetersenii serovar Hardjo-bovis (strain JB197)).